A 154-amino-acid chain; its full sequence is SsrA-binding protein (154 aa).

The segment at 132-154 (KRESIKKRQDKRDMERALKRGAE) is disordered.

Belongs to the SmpB family.

It localises to the cytoplasm. In terms of biological role, required for rescue of stalled ribosomes mediated by trans-translation. Binds to transfer-messenger RNA (tmRNA), required for stable association of tmRNA with ribosomes. tmRNA and SmpB together mimic tRNA shape, replacing the anticodon stem-loop with SmpB. tmRNA is encoded by the ssrA gene; the 2 termini fold to resemble tRNA(Ala) and it encodes a 'tag peptide', a short internal open reading frame. During trans-translation Ala-aminoacylated tmRNA acts like a tRNA, entering the A-site of stalled ribosomes, displacing the stalled mRNA. The ribosome then switches to translate the ORF on the tmRNA; the nascent peptide is terminated with the 'tag peptide' encoded by the tmRNA and targeted for degradation. The ribosome is freed to recommence translation, which seems to be the essential function of trans-translation. The sequence is that of SsrA-binding protein from Acaryochloris marina (strain MBIC 11017).